The sequence spans 274 residues: 2,3,4,5-tetrahydropyridine-2,6-dicarboxylate N-succinyltransferase (274 aa).

Residues Arg104 and Asp141 each coordinate substrate.

This sequence belongs to the transferase hexapeptide repeat family. Homotrimer.

Its subcellular location is the cytoplasm. The catalysed reaction is (S)-2,3,4,5-tetrahydrodipicolinate + succinyl-CoA + H2O = (S)-2-succinylamino-6-oxoheptanedioate + CoA. The protein operates within amino-acid biosynthesis; L-lysine biosynthesis via DAP pathway; LL-2,6-diaminopimelate from (S)-tetrahydrodipicolinate (succinylase route): step 1/3. In Escherichia coli O139:H28 (strain E24377A / ETEC), this protein is 2,3,4,5-tetrahydropyridine-2,6-dicarboxylate N-succinyltransferase.